Consider the following 400-residue polypeptide: Elongation factor Tu (400 aa).

A tr-type G domain is found at 10 to 209; the sequence is KEHVNIGTIG…QVDNWIDAPL (200 aa). Residues 19–26 form a G1 region; sequence GHVDHGKT. Position 19-26 (19-26) interacts with GTP; it reads GHVDHGKT. Thr-26 contacts Mg(2+). The segment at 61–65 is G2; it reads GITIN. A G3 region spans residues 82 to 85; sequence DCPG. Residues 82 to 86 and 137 to 140 contribute to the GTP site; these read DCPGH and NKVD. Residues 137 to 140 form a G4 region; the sequence is NKVD. Positions 179–181 are G5; that stretch reads SAL.

The protein belongs to the TRAFAC class translation factor GTPase superfamily. Classic translation factor GTPase family. EF-Tu/EF-1A subfamily. As to quaternary structure, monomer.

The protein resides in the cytoplasm. The enzyme catalyses GTP + H2O = GDP + phosphate + H(+). Functionally, GTP hydrolase that promotes the GTP-dependent binding of aminoacyl-tRNA to the A-site of ribosomes during protein biosynthesis. This is Elongation factor Tu from Mycoplasma mobile (strain ATCC 43663 / 163K / NCTC 11711) (Mesomycoplasma mobile).